Consider the following 160-residue polypeptide: 3-hydroxyacyl-[acyl-carrier-protein] dehydratase FabZ (160 aa).

H60 is a catalytic residue.

Belongs to the thioester dehydratase family. FabZ subfamily.

The protein localises to the cytoplasm. It catalyses the reaction a (3R)-hydroxyacyl-[ACP] = a (2E)-enoyl-[ACP] + H2O. Involved in unsaturated fatty acids biosynthesis. Catalyzes the dehydration of short chain beta-hydroxyacyl-ACPs and long chain saturated and unsaturated beta-hydroxyacyl-ACPs. This is 3-hydroxyacyl-[acyl-carrier-protein] dehydratase FabZ from Rhodospirillum rubrum (strain ATCC 11170 / ATH 1.1.1 / DSM 467 / LMG 4362 / NCIMB 8255 / S1).